Consider the following 394-residue polypeptide: Enoyl-[acyl-carrier-protein] reductase [NADH] (394 aa).

Residues 48-53, 74-75, 111-112, and 139-140 contribute to the NAD(+) site; these read GASTGY, YE, DA, and LA. Tyr225 contributes to the substrate binding site. Tyr235 functions as the Proton donor in the catalytic mechanism. NAD(+) contacts are provided by residues Lys244 and 273 to 275; that span reads LVT.

It belongs to the TER reductase family. In terms of assembly, monomer.

The enzyme catalyses a 2,3-saturated acyl-[ACP] + NAD(+) = a (2E)-enoyl-[ACP] + NADH + H(+). Its pathway is lipid metabolism; fatty acid biosynthesis. Functionally, involved in the final reduction of the elongation cycle of fatty acid synthesis (FAS II). Catalyzes the reduction of a carbon-carbon double bond in an enoyl moiety that is covalently linked to an acyl carrier protein (ACP). The chain is Enoyl-[acyl-carrier-protein] reductase [NADH] from Opitutus terrae (strain DSM 11246 / JCM 15787 / PB90-1).